Here is a 442-residue protein sequence, read N- to C-terminus: Putative amino acid transporter YuiF (442 aa).

11 helical membrane-spanning segments follow: residues 21–41, 51–71, 103–123, 146–166, 190–210, 236–256, 259–279, 292–312, 335–355, 364–384, and 421–441; these read IVIALIIGALAGGLTGGLGLG, LGGNATVAVSYAMLGAFAAAL, LIVLIILIVSCFSQNVVPVHI, LIACVITFGLTAPYILLPVGF, IPYALIIPVAGMVVGLILSVI, IGIAVLAIVVSLGVQLYLSQT, VEGMIMGALAGLIVLFVSGVM, MVLMAFIGFVMLVAAGFSNVL, LGALLMLIVGLLITMGIGSSF, IFVPLCMQLGFSPMATIAIIG, and VPTFIFYNIPLVIFGWIAALV.

The protein resides in the cell membrane. The chain is Putative amino acid transporter YuiF (yuiF) from Bacillus subtilis (strain 168).